Consider the following 248-residue polypeptide: 5'-nucleotidase SurE (248 aa).

Residues Asp-8, Asp-9, Ser-39, and Asn-91 each coordinate a divalent metal cation.

It belongs to the SurE nucleotidase family. The cofactor is a divalent metal cation.

The protein localises to the cytoplasm. It catalyses the reaction a ribonucleoside 5'-phosphate + H2O = a ribonucleoside + phosphate. Its function is as follows. Nucleotidase that shows phosphatase activity on nucleoside 5'-monophosphates. The chain is 5'-nucleotidase SurE from Geotalea uraniireducens (strain Rf4) (Geobacter uraniireducens).